The sequence spans 432 residues: Peptidyl-prolyl cis-trans isomerase cyp6 (432 aa).

The 168-residue stretch at 1 to 168 (MSVLIETTVG…RDIRIKHTII (168 aa)) folds into the PPIase cyclophilin-type domain. Ser206 is subject to Phosphoserine. In terms of domain architecture, RRM spans 244-322 (NVLFVCKLNP…SRIHVDFSQS (79 aa)). The tract at residues 330–432 (YNSNRDRKRS…DRRYRDDRYR (103 aa)) is disordered. Basic and acidic residues-rich tracts occupy residues 341-366 (SRSD…DDYR), 373-395 (DHRD…DDRS), and 406-432 (NCDD…DRYR).

Belongs to the cyclophilin-type PPIase family. PPIL4 subfamily.

The protein resides in the nucleus. The enzyme catalyses [protein]-peptidylproline (omega=180) = [protein]-peptidylproline (omega=0). Functionally, PPIases accelerate the folding of proteins. It catalyzes the cis-trans isomerization of proline imidic peptide bonds in oligopeptides. The sequence is that of Peptidyl-prolyl cis-trans isomerase cyp6 (cyp6) from Schizosaccharomyces pombe (strain 972 / ATCC 24843) (Fission yeast).